The sequence spans 65 residues: Gallinacin-1 (65 aa).

Residues 1-19 form the signal peptide; sequence MRIVYLLLPFILLLAQGAA. A propeptide spanning residues 20-25 is cleaved from the precursor; sequence GSSQAL. Intrachain disulfides connect C31–C59, C38–C53, and C43–C60.

This sequence belongs to the beta-defensin family. In terms of tissue distribution, strong expression in the bone marrow, lung, testis. Moderate expression in the bursa and intestine. Low expression in the cloaca, gall bladder, brain and pancreas. Expressed in the vagina, ovarian stroma and the theca and granulosa layers of the ovarian follicle.

The protein resides in the secreted. It is found in the cytoplasmic granule. Functionally, has bactericidal activity. Potent activity against E.coli ML-35, L.monocytogenes EGD and C.albicans. The sequence is that of Gallinacin-1 (GAL1) from Gallus gallus (Chicken).